Reading from the N-terminus, the 501-residue chain is E3 ubiquitin-protein ligase TRIM35 (501 aa).

Met-1 carries the N-acetylmethionine modification. The residue at position 8 (Ser-8) is a Phosphoserine. The RING-type zinc finger occupies 21-61; it reads CAVCYDPFRDAVTLRCGHNFCRRCVSGCWEVQTTPSCPVCK. A B box-type zinc finger spans residues 96–137; that stretch reads RSPRPCRAHRAPLTLFCLEDKELLCCACQADARHQEHRVQPI. Residues Cys-101, His-104, Cys-123, and His-129 each contribute to the Zn(2+) site. Positions 200–252 form a coiled coil; it reads VEEQATLDAMKEESRKKHLQAEEKMKQLAEQTEALAREIERLQMEMKEDDMTF. The B30.2/SPRY domain maps to 284 to 495; the sequence is LESLQYRVWK…LRICHLRVSI (212 aa).

The protein belongs to the TRIM/RBCC family. Interacts with PKM isoform M2, but not isoform M1; this interaction may compete with that between PKM and FGFR1, and hence reduces FGFR1-dependent tyrosine phosphorylation of PKM. Interacts with IRF7; this interaction promotes IRF7 proteasomal degradation. Interacts with TRAF3; this interaction promotes TRAF3 activation. Widely expressed. Highly expressed in brain, heart, kidney, spleen, skeletal muscle, lung and thymus. Lower expression found in stomach, large intestine and bone marrow.

The protein resides in the cytoplasm. It is found in the nucleus. It carries out the reaction S-ubiquitinyl-[E2 ubiquitin-conjugating enzyme]-L-cysteine + [acceptor protein]-L-lysine = [E2 ubiquitin-conjugating enzyme]-L-cysteine + N(6)-ubiquitinyl-[acceptor protein]-L-lysine.. It functions in the pathway protein modification; protein ubiquitination. In terms of biological role, E3 ubiquitin-protein ligase that participates in multiple biological processes including cell death, glucose metabolism, and in particular, the innate immune response. Mediates 'Lys-63'-linked polyubiquitination of TRAF3 thereby promoting type I interferon production via RIG-I signaling pathway. Can also catalyze 'Lys-48'-linked polyubiquitination and proteasomal degradation of viral proteins such as influenza virus PB2. Acts as a negative feedback regulator of TLR7- and TLR9-triggered signaling. Mechanistically, promotes the 'Lys-48'-linked ubiquitination of IRF7 and induces its degradation via a proteasome-dependent pathway. Reduces FGFR1-dependent tyrosine phosphorylation of PKM, inhibiting PKM-dependent lactate production, glucose metabolism, and cell growth. The sequence is that of E3 ubiquitin-protein ligase TRIM35 (Trim35) from Mus musculus (Mouse).